Consider the following 534-residue polypeptide: CTP synthase (534 aa).

The segment at 1 to 267 (MTKYIFVTGG…DQIVCDHLKL (267 aa)) is amidoligase domain. Ser-13 is a binding site for CTP. Position 13 (Ser-13) interacts with UTP. 14–19 (SIGKGI) serves as a coordination point for ATP. Tyr-54 contributes to the L-glutamine binding site. An ATP-binding site is contributed by Asp-71. Mg(2+) contacts are provided by Asp-71 and Glu-141. Residues 148–150 (DIE), 188–193 (KTKPTQ), and Lys-224 each bind CTP. UTP is bound by residues 188–193 (KTKPTQ) and Lys-224. Position 240-242 (240-242 (RDV)) interacts with ATP. Positions 292-534 (KIALVGKYVE…FVTAAIKNSN (243 aa)) constitute a Glutamine amidotransferase type-1 domain. An L-glutamine-binding site is contributed by Gly-354. Residue Cys-381 is the Nucleophile; for glutamine hydrolysis of the active site. L-glutamine is bound by residues 382–385 (LGMQ), Glu-405, and Arg-463. Catalysis depends on residues His-508 and Glu-510.

It belongs to the CTP synthase family. In terms of assembly, homotetramer.

The catalysed reaction is UTP + L-glutamine + ATP + H2O = CTP + L-glutamate + ADP + phosphate + 2 H(+). The enzyme catalyses L-glutamine + H2O = L-glutamate + NH4(+). It carries out the reaction UTP + NH4(+) + ATP = CTP + ADP + phosphate + 2 H(+). The protein operates within pyrimidine metabolism; CTP biosynthesis via de novo pathway; CTP from UDP: step 2/2. Allosterically activated by GTP, when glutamine is the substrate; GTP has no effect on the reaction when ammonia is the substrate. The allosteric effector GTP functions by stabilizing the protein conformation that binds the tetrahedral intermediate(s) formed during glutamine hydrolysis. Inhibited by the product CTP, via allosteric rather than competitive inhibition. Functionally, catalyzes the ATP-dependent amination of UTP to CTP with either L-glutamine or ammonia as the source of nitrogen. Regulates intracellular CTP levels through interactions with the four ribonucleotide triphosphates. This chain is CTP synthase, found in Streptococcus pyogenes serotype M2 (strain MGAS10270).